A 304-amino-acid chain; its full sequence is MKPAMSVEIGSLKLRNPVMTASGTFGYGEEFSQYVDLEKIGAFVTKGLSLKPRAGNPTPRIVETPGGMLNAIGLQNVGIDAFIQKKVPFLRSVNTPAIANFFGYTPDEYAELASRLDAIPEVAALEVNISCPNVKQGGIVFGTDPGCAASVVAACRAATQKTLIVKLSPNVTDIVEMAQACEGAGADALSVINTLTGMAIDLERRRPVLANVTGGLSGPAIKPVALRMVWQVARAVKVPVIGIGGIMSATDALEFILAGATAVQVGTASFVNPAAAQEIAEGMEQWLAERGIADISSLIGALEG.

FMN is bound by residues serine 22 and 46–47 (KG). Residues lysine 46 and 70–74 (NAIGL) contribute to the substrate site. The FMN site is built by asparagine 100 and asparagine 128. Asparagine 128 is a binding site for substrate. Residue cysteine 131 is the Nucleophile of the active site. Lysine 166 and isoleucine 192 together coordinate FMN. A substrate-binding site is contributed by 193–194 (NT). FMN is bound by residues glycine 218, 244-245 (GG), and 266-267 (GT).

Belongs to the dihydroorotate dehydrogenase family. Type 1 subfamily. As to quaternary structure, heterotetramer of 2 PyrK and 2 PyrD type B subunits. Requires FMN as cofactor.

Its subcellular location is the cytoplasm. It catalyses the reaction (S)-dihydroorotate + NAD(+) = orotate + NADH + H(+). It functions in the pathway pyrimidine metabolism; UMP biosynthesis via de novo pathway; orotate from (S)-dihydroorotate (NAD(+) route): step 1/1. Its function is as follows. Catalyzes the conversion of dihydroorotate to orotate with NAD(+) as electron acceptor. The sequence is that of Dihydroorotate dehydrogenase B (NAD(+)), catalytic subunit (pyrD) from Trichlorobacter lovleyi (strain ATCC BAA-1151 / DSM 17278 / SZ) (Geobacter lovleyi).